Here is a 418-residue protein sequence, read N- to C-terminus: L-rhamnose isomerase (418 aa).

Positions 262, 294, and 296 each coordinate Mn(2+).

This sequence belongs to the rhamnose isomerase family. As to quaternary structure, homotetramer. It depends on Mn(2+) as a cofactor.

The protein resides in the cytoplasm. The enzyme catalyses L-rhamnopyranose = L-rhamnulose. It participates in carbohydrate degradation; L-rhamnose degradation; glycerone phosphate from L-rhamnose: step 1/3. Its function is as follows. Catalyzes the interconversion of L-rhamnose and L-rhamnulose. In Cronobacter sakazakii (strain ATCC BAA-894) (Enterobacter sakazakii), this protein is L-rhamnose isomerase.